A 323-amino-acid polypeptide reads, in one-letter code: Methionyl-tRNA formyltransferase (323 aa).

113-116 provides a ligand contact to (6S)-5,6,7,8-tetrahydrofolate; sequence SLLP.

This sequence belongs to the Fmt family.

The enzyme catalyses L-methionyl-tRNA(fMet) + (6R)-10-formyltetrahydrofolate = N-formyl-L-methionyl-tRNA(fMet) + (6S)-5,6,7,8-tetrahydrofolate + H(+). Its function is as follows. Attaches a formyl group to the free amino group of methionyl-tRNA(fMet). The formyl group appears to play a dual role in the initiator identity of N-formylmethionyl-tRNA by promoting its recognition by IF2 and preventing the misappropriation of this tRNA by the elongation apparatus. This is Methionyl-tRNA formyltransferase from Porphyromonas gingivalis (strain ATCC BAA-308 / W83).